A 198-amino-acid chain; its full sequence is CXXC-type zinc finger protein 4 (198 aa).

Positions 114-134 (NHSSSSSSSSGGAGGANPAKK) are disordered. Residues 132–173 (AKKKRKRCGVCVPCKRLINCGVCSSCRNRKTGHQICKFRKCE) form a CXXC-type zinc finger. Residues Cys-139, Cys-142, Cys-145, Cys-151, Cys-154, and Cys-157 each contribute to the Zn(2+) site. Residues 161 to 166 (KTGHQI) are interaction with DVL1. Residues Cys-167 and Cys-172 each contribute to the Zn(2+) site.

In terms of assembly, interacts with the PDZ domain of DVL1.

The protein localises to the cytoplasm. In terms of biological role, acts as a negative regulator of the Wnt signaling pathway via its interaction with DVL1. Binds preferentially to DNA containing cytidine-phosphate-guanosine (CpG) dinucleotides over CpH (H=A, T, and C), hemimethylated-CpG and hemimethylated-hydroxymethyl-CpG. The protein is CXXC-type zinc finger protein 4 (CXXC4) of Homo sapiens (Human).